The chain runs to 272 residues: Polar tube protein 2 (272 aa).

Residues 1 to 21 (MLLLFTVVTLVSAAQVAPVTP) form the signal peptide. An N-linked (GlcNAc...) asparagine glycan is attached at Asn134. Residues 231–272 (RAIQKKEVKESSKDGEKSSTQNGEGTTDDEDGQQSPDGNGPE) are disordered. Basic and acidic residues predominate over residues 234-247 (QKKEVKESSKDGEK). Residues 263 to 272 (QQSPDGNGPE) are compositionally biased toward polar residues.

The protein resides in the spore polar tube. Its function is as follows. Involved in formation of a polar tube through which the infectious agent is passed on to the host cell. This is Polar tube protein 2 (PTP2) from Encephalitozoon hellem (Microsporidian parasite).